The primary structure comprises 318 residues: Receptor homology region, transmembrane domain- and RING domain-containing protein 6 (318 aa).

An N-terminal signal peptide occupies residues 1–20 (MNGSWITILSLLVISQLASS). The Lumenal portion of the chain corresponds to 22–162 (VTLIGKNTFL…LIPGFGISSW (141 aa)). An intrachain disulfide couples cysteine 62 to cysteine 87. Residues 70-143 (EKGSKFRPSY…RTSGEVLKEY (74 aa)) form the PA domain. Asparagine 121 carries an N-linked (GlcNAc...) asparagine glycan. Residues 163–183 (SIMAITFVSLLVISAVLASYF) traverse the membrane as a helical segment. At 184–318 (SVRRHRIRQH…DLPIVVRVYL (135 aa)) the chain is on the cytoplasmic side. An RING-type; atypical zinc finger spans residues 233 to 275 (CAICIDDYRVGEILRILPCKHKYHAVCIDSWLGRCRSFCPVCK).

Its subcellular location is the prevacuolar compartment membrane. The protein resides in the protein storage vacuole membrane. Its function is as follows. Involved in the trafficking of vacuolar proteins. May function as a sorting receptor for protein trafficking to the protein storage vacuole (PSV). The chain is Receptor homology region, transmembrane domain- and RING domain-containing protein 6 (RMR6) from Arabidopsis thaliana (Mouse-ear cress).